The chain runs to 310 residues: Zinc finger protein 346 (310 aa).

Methionine 1 is subject to N-acetylmethionine. Residues 1–12 (MEYPAPAAVQAA) are compositionally biased toward low complexity. The disordered stretch occupies residues 1–33 (MEYPAPAAVQAADGGGAGPYNSSELLEGQEPDG). Residues 70 to 104 (FTNTQCKVCCALLISESQKLAHYQSKKHANKVKRY) form a Matrin-type 1 zinc finger. The Zn(2+) site is built by cysteine 75, cysteine 78, histidine 91, and histidine 97. Residue lysine 114 forms a Glycyl lysine isopeptide (Lys-Gly) (interchain with G-Cter in SUMO2) linkage. Residues 131-165 (DKNQCCPICNMTFSSPVVAQSHYLGKTHAKNLKLK) form a Matrin-type 2 zinc finger. Residues cysteine 136, cysteine 139, histidine 152, and histidine 158 each coordinate Zn(2+). Lysine 170 participates in a covalent cross-link: Glycyl lysine isopeptide (Lys-Gly) (interchain with G-Cter in SUMO2). Matrin-type zinc fingers lie at residues 198-232 (DPDKFCSLCHATFNDPVMAQQHYVGKKHRKQETKL) and 252-286 (GKGYPCKTCKIVLNSIEQYQAHVSGFKHKNQSPKT). Residues 278–310 (KHKNQSPKTVASSLGQIPMQRQPIQKDSTTLED) are disordered. Composition is skewed to polar residues over residues 283–292 (SPKTVASSLG) and 299–310 (QPIQKDSTTLED).

In terms of assembly, forms a heteromeric complex with XPO5 and ILF3. Found in a nuclear export complex with XPO5, RAN, ILF3, ZNF346 and double-stranded RNA. Interacts with XPO5. Interacts with ILF3 in an RNA-independent manner.

The protein localises to the nucleus. It localises to the nucleolus. The protein resides in the cytoplasm. Its function is as follows. Binds with low affinity to dsDNA and ssRNA, and with high affinity to dsRNA, with no detectable sequence specificity. This chain is Zinc finger protein 346 (ZNF346), found in Pongo abelii (Sumatran orangutan).